A 285-amino-acid polypeptide reads, in one-letter code: Methylamine utilization protein MauF (285 aa).

7 consecutive transmembrane segments (helical) span residues 39-59 (FIMMLTAVASGVFAGRVMHST), 60-80 (MSVEMALTGLFVVLAFVGGLL), 119-139 (YAIGAVVLGGALGGISWLLFA), 145-165 (YAVIGLATLAIGYGLHQFGFL), 188-208 (VIGLLYGFSLGMNYLTYVQTP), 212-232 (IVTGVALLSGGVKAGIAVIAV), and 265-285 (VEVDGFLLLAIASAALMLVML).

Its subcellular location is the cell membrane. It participates in one-carbon metabolism; methylamine degradation. The polypeptide is Methylamine utilization protein MauF (mauF) (Methylophilus methylotrophus (Bacterium W3A1)).